A 416-amino-acid chain; its full sequence is Enolase (416 aa).

Residue Q160 participates in (2R)-2-phosphoglycerate binding. E204 (proton donor) is an active-site residue. Residues D239, E280, and D306 each contribute to the Mg(2+) site. Residues K331, R360, S361, and K382 each contribute to the (2R)-2-phosphoglycerate site. The Proton acceptor role is filled by K331.

Belongs to the enolase family. It depends on Mg(2+) as a cofactor.

It localises to the cytoplasm. The protein resides in the secreted. It is found in the cell surface. The enzyme catalyses (2R)-2-phosphoglycerate = phosphoenolpyruvate + H2O. The protein operates within carbohydrate degradation; glycolysis; pyruvate from D-glyceraldehyde 3-phosphate: step 4/5. In terms of biological role, catalyzes the reversible conversion of 2-phosphoglycerate (2-PG) into phosphoenolpyruvate (PEP). It is essential for the degradation of carbohydrates via glycolysis. The protein is Enolase of Sulfolobus acidocaldarius (strain ATCC 33909 / DSM 639 / JCM 8929 / NBRC 15157 / NCIMB 11770).